We begin with the raw amino-acid sequence, 543 residues long: CTP synthase (543 aa).

Residues Met1–Leu267 form an amidoligase domain region. CTP is bound at residue Ser15. Ser15 contributes to the UTP binding site. ATP contacts are provided by residues Ser16–Ile21 and Asp73. 2 residues coordinate Mg(2+): Asp73 and Glu141. CTP-binding positions include Asp148–Glu150, Lys188–Gln193, and Lys224. UTP is bound by residues Lys188–Gln193 and Lys224. The region spanning Lys292–Asn543 is the Glutamine amidotransferase type-1 domain. L-glutamine is bound at residue Gly354. Cys381 functions as the Nucleophile; for glutamine hydrolysis in the catalytic mechanism. L-glutamine is bound by residues Leu382–Gln385, Glu405, and Arg473. Residues His516 and Glu518 contribute to the active site.

The protein belongs to the CTP synthase family. In terms of assembly, homotetramer.

The enzyme catalyses UTP + L-glutamine + ATP + H2O = CTP + L-glutamate + ADP + phosphate + 2 H(+). The catalysed reaction is L-glutamine + H2O = L-glutamate + NH4(+). It carries out the reaction UTP + NH4(+) + ATP = CTP + ADP + phosphate + 2 H(+). The protein operates within pyrimidine metabolism; CTP biosynthesis via de novo pathway; CTP from UDP: step 2/2. With respect to regulation, allosterically activated by GTP, when glutamine is the substrate; GTP has no effect on the reaction when ammonia is the substrate. The allosteric effector GTP functions by stabilizing the protein conformation that binds the tetrahedral intermediate(s) formed during glutamine hydrolysis. Inhibited by the product CTP, via allosteric rather than competitive inhibition. In terms of biological role, catalyzes the ATP-dependent amination of UTP to CTP with either L-glutamine or ammonia as the source of nitrogen. Regulates intracellular CTP levels through interactions with the four ribonucleotide triphosphates. The polypeptide is CTP synthase (Campylobacter jejuni subsp. jejuni serotype O:2 (strain ATCC 700819 / NCTC 11168)).